The sequence spans 273 residues: uncharacterized protein (273 aa).

The next 2 membrane-spanning stretches (helical) occupy residues 24–44 and 103–123; these read VGVSAIDGLIAAVVAGPVTIL and IVGPWAIGFSLGLSLGGEAWA. The segment at 132 to 194 is disordered; the sequence is SDLPHHGRQS…QPPAQTQPYR (63 aa). Residues 164-179 show a composition bias toward basic residues; it reads SSHHIRSPAVARHHKT. Low complexity predominate over residues 183–192; sequence TTQPPAQTQP.

Its subcellular location is the cell membrane. This is an uncharacterized protein from Sinorhizobium fredii (strain NBRC 101917 / NGR234).